Here is an 865-residue protein sequence, read N- to C-terminus: Alanine--tRNA ligase (865 aa).

Zn(2+) is bound by residues His-554, His-558, Cys-656, and His-660.

This sequence belongs to the class-II aminoacyl-tRNA synthetase family. It depends on Zn(2+) as a cofactor.

It localises to the cytoplasm. The enzyme catalyses tRNA(Ala) + L-alanine + ATP = L-alanyl-tRNA(Ala) + AMP + diphosphate. Catalyzes the attachment of alanine to tRNA(Ala) in a two-step reaction: alanine is first activated by ATP to form Ala-AMP and then transferred to the acceptor end of tRNA(Ala). Also edits incorrectly charged Ser-tRNA(Ala) and Gly-tRNA(Ala) via its editing domain. This is Alanine--tRNA ligase from Francisella tularensis subsp. tularensis (strain FSC 198).